Here is a 259-residue protein sequence, read N- to C-terminus: Glutamate racemase (259 aa).

Residues aspartate 7–serine 8 and tyrosine 39–glycine 40 contribute to the substrate site. The Proton donor/acceptor role is filled by cysteine 70. Asparagine 71 to serine 72 lines the substrate pocket. The Proton donor/acceptor role is filled by cysteine 180. Threonine 181–histidine 182 serves as a coordination point for substrate.

The protein belongs to the aspartate/glutamate racemases family.

It catalyses the reaction L-glutamate = D-glutamate. It participates in cell wall biogenesis; peptidoglycan biosynthesis. Its function is as follows. Provides the (R)-glutamate required for cell wall biosynthesis. This Hydrogenobaculum sp. (strain Y04AAS1) protein is Glutamate racemase.